The following is an 815-amino-acid chain: TBC1 domain family member 5 (815 aa).

Serine 44 is modified (phosphoserine). The interval 56-64 (MKEWEELFV) is required for interaction with retromer; involved in interaction with ATG8 family proteins. Residues 57-62 (KEWEEL) carry the LIR 1 motif. One can recognise a Rab-GAP TBC domain in the interval 81–359 (LRSSRFRSIC…VVWDALFADS (279 aa)). Arginine 448 carries the post-translational modification Asymmetric dimethylarginine; alternate. Arginine 448 bears the Omega-N-methylarginine; alternate mark. Serine 460 bears the Phosphoserine mark. A disordered region spans residues 475–591 (PGSMGGPVPG…SATKKDSFFS (117 aa)). Low complexity-rich tracts occupy residues 483–492 (PGNNSSSSFS) and 510–539 (QQQQ…QQQQ). Phosphoserine is present on residues serine 546, serine 563, serine 565, serine 568, serine 578, and serine 608. Residues 556–568 (SSKTISSSPSIES) are compositionally biased toward low complexity. 2 disordered regions span residues 702-733 (SGQD…PDDF) and 754-815 (QPLL…PLDI). A compositionally biased stretch (polar residues) spans 754–765 (QPLLTLRSTSGK). Over residues 783-796 (PASASASSSNPSSS) the composition is skewed to low complexity. The LIR 2 motif lies at 805–809 (SGFTI). The interval 806–811 (GFTIVS) is required for interaction with ATG8 family proteins. Residue serine 811 is modified to Phosphoserine.

As to quaternary structure, interacts with MAP1LC3A, MAP1LC3B, MAP1LC3C, GABARAP, GABARAPL1, GABARAPL2. Interacts with VPS29 and VPS35; indicative for an association with retromer CSC subcomplex. MAP1LC3A and VPS29 compete for binding to TBC1D5. Interacts with AP2M1; indicative for an association with the AP2 complex. Interacts with ULK1 and ATG13 (phosphorylated); indicative for an association with the activated ULK1-ATG13-FIP200 complex. Interacts with ATG9A; the interactions seems to be restricted to the AP2-clathrin-associated fraction of ATG9A.

It localises to the endosome membrane. It is found in the cytoplasmic vesicle. Its subcellular location is the autophagosome. Its function is as follows. May act as a GTPase-activating protein for Rab family protein(s). May act as a GAP for RAB7A. Can displace RAB7A and retromer CSC subcomplex from the endosomal membrane to the cytosol; at least retromer displacement seems to require its catalytic activity. Required for retrograde transport of cargo proteins from endosomes to the trans-Golgi network (TGN); the function seems to require its catalytic activity. Involved in regulation of autophagy. May act as a molecular switch between endosomal and autophagosomal transport and is involved in reprogramming vesicle trafficking upon autophagy induction. Involved in the trafficking of ATG9A upon activation of autophagy. May regulate the recruitment of ATG9A-AP2-containing vesicles to autophagic membranes. This is TBC1 domain family member 5 (Tbc1d5) from Mus musculus (Mouse).